We begin with the raw amino-acid sequence, 225 residues long: NAD(P)H-quinone oxidoreductase subunit K, chloroplastic (225 aa).

C43, C44, C108, and C139 together coordinate [4Fe-4S] cluster.

The protein belongs to the complex I 20 kDa subunit family. As to quaternary structure, NDH is composed of at least 16 different subunits, 5 of which are encoded in the nucleus. It depends on [4Fe-4S] cluster as a cofactor.

The protein localises to the plastid. It localises to the chloroplast thylakoid membrane. It carries out the reaction a plastoquinone + NADH + (n+1) H(+)(in) = a plastoquinol + NAD(+) + n H(+)(out). The catalysed reaction is a plastoquinone + NADPH + (n+1) H(+)(in) = a plastoquinol + NADP(+) + n H(+)(out). In terms of biological role, NDH shuttles electrons from NAD(P)H:plastoquinone, via FMN and iron-sulfur (Fe-S) centers, to quinones in the photosynthetic chain and possibly in a chloroplast respiratory chain. The immediate electron acceptor for the enzyme in this species is believed to be plastoquinone. Couples the redox reaction to proton translocation, and thus conserves the redox energy in a proton gradient. The polypeptide is NAD(P)H-quinone oxidoreductase subunit K, chloroplastic (Nasturtium officinale (Watercress)).